A 168-amino-acid chain; its full sequence is Photosystem I assembly protein Ycf3 (168 aa).

TPR repeat units follow at residues 35–68, 72–105, and 120–153; these read AFTY…EIDP, SYIL…NPFL, and GEQA…TPGN.

The protein belongs to the Ycf3 family.

It localises to the plastid. The protein localises to the chloroplast thylakoid membrane. Functionally, essential for the assembly of the photosystem I (PSI) complex. May act as a chaperone-like factor to guide the assembly of the PSI subunits. This is Photosystem I assembly protein Ycf3 from Lemna minor (Common duckweed).